A 124-amino-acid chain; its full sequence is S-adenosylmethionine decarboxylase proenzyme (124 aa).

Catalysis depends on S63, which acts as the Schiff-base intermediate with substrate; via pyruvic acid. S63 carries the pyruvic acid (Ser); by autocatalysis modification. Residue H68 is the Proton acceptor; for processing activity of the active site. The active-site Proton donor; for catalytic activity is the C83.

It belongs to the prokaryotic AdoMetDC family. Type 1 subfamily. As to quaternary structure, heterotetramer of two alpha and two beta chains arranged as a dimer of alpha/beta heterodimers. Requires pyruvate as cofactor. In terms of processing, is synthesized initially as an inactive proenzyme. Formation of the active enzyme involves a self-maturation process in which the active site pyruvoyl group is generated from an internal serine residue via an autocatalytic post-translational modification. Two non-identical subunits are generated from the proenzyme in this reaction, and the pyruvate is formed at the N-terminus of the alpha chain, which is derived from the carboxyl end of the proenzyme. The post-translation cleavage follows an unusual pathway, termed non-hydrolytic serinolysis, in which the side chain hydroxyl group of the serine supplies its oxygen atom to form the C-terminus of the beta chain, while the remainder of the serine residue undergoes an oxidative deamination to produce ammonia and the pyruvoyl group blocking the N-terminus of the alpha chain.

The enzyme catalyses S-adenosyl-L-methionine + H(+) = S-adenosyl 3-(methylsulfanyl)propylamine + CO2. It participates in amine and polyamine biosynthesis; S-adenosylmethioninamine biosynthesis; S-adenosylmethioninamine from S-adenosyl-L-methionine: step 1/1. In terms of biological role, catalyzes the decarboxylation of S-adenosylmethionine to S-adenosylmethioninamine (dcAdoMet), the propylamine donor required for the synthesis of the polyamines spermine and spermidine from the diamine putrescine. The polypeptide is S-adenosylmethionine decarboxylase proenzyme (Thermoanaerobacter pseudethanolicus (strain ATCC 33223 / 39E) (Clostridium thermohydrosulfuricum)).